We begin with the raw amino-acid sequence, 76 residues long: uORF2 protein (76 aa).

Functionally, plays a role in viral replication. The protein is uORF2 protein of Zika virus (isolate ZIKV/Human/French Polynesia/10087PF/2013) (ZIKV).